The following is a 629-amino-acid chain: Phosphomethylpyrimidine synthase (629 aa).

Positions 1 to 13 (MTTKSKNAINLSD) are enriched in polar residues. Positions 1–22 (MTTKSKNAINLSDSAKVDEQSV) are disordered. Substrate-binding positions include Asn-233, Met-262, Tyr-291, His-327, 347–349 (SRG), 388–391 (DGLR), and Glu-427. His-431 lines the Zn(2+) pocket. Tyr-454 is a substrate binding site. His-495 is a binding site for Zn(2+). Cys-575, Cys-578, and Cys-583 together coordinate [4Fe-4S] cluster.

Belongs to the ThiC family. As to quaternary structure, homodimer. [4Fe-4S] cluster serves as cofactor.

The catalysed reaction is 5-amino-1-(5-phospho-beta-D-ribosyl)imidazole + S-adenosyl-L-methionine = 4-amino-2-methyl-5-(phosphooxymethyl)pyrimidine + CO + 5'-deoxyadenosine + formate + L-methionine + 3 H(+). Its pathway is cofactor biosynthesis; thiamine diphosphate biosynthesis. Its function is as follows. Catalyzes the synthesis of the hydroxymethylpyrimidine phosphate (HMP-P) moiety of thiamine from aminoimidazole ribotide (AIR) in a radical S-adenosyl-L-methionine (SAM)-dependent reaction. This chain is Phosphomethylpyrimidine synthase, found in Pseudomonas fluorescens (strain Pf0-1).